The chain runs to 411 residues: LL-diaminopimelate aminotransferase (411 aa).

Substrate is bound by residues Tyr-15 and Gly-42. Residues Tyr-72, 108–109 (SK), Tyr-132, Asn-187, Tyr-218, and 246–248 (SFS) each bind pyridoxal 5'-phosphate. 3 residues coordinate substrate: Lys-109, Tyr-132, and Asn-187. Position 249 is an N6-(pyridoxal phosphate)lysine (Lys-249). Pyridoxal 5'-phosphate-binding residues include Arg-257 and Asn-292. Substrate contacts are provided by Asn-292 and Arg-388.

It belongs to the class-I pyridoxal-phosphate-dependent aminotransferase family. LL-diaminopimelate aminotransferase subfamily. As to quaternary structure, homodimer. Pyridoxal 5'-phosphate serves as cofactor.

It catalyses the reaction (2S,6S)-2,6-diaminopimelate + 2-oxoglutarate = (S)-2,3,4,5-tetrahydrodipicolinate + L-glutamate + H2O + H(+). It functions in the pathway amino-acid biosynthesis; L-lysine biosynthesis via DAP pathway; LL-2,6-diaminopimelate from (S)-tetrahydrodipicolinate (aminotransferase route): step 1/1. Involved in the synthesis of meso-diaminopimelate (m-DAP or DL-DAP), required for both lysine and peptidoglycan biosynthesis. Catalyzes the direct conversion of tetrahydrodipicolinate to LL-diaminopimelate. This Synechococcus elongatus (strain ATCC 33912 / PCC 7942 / FACHB-805) (Anacystis nidulans R2) protein is LL-diaminopimelate aminotransferase.